The primary structure comprises 731 residues: Alpha-catulin (731 aa).

Residues Ser373 and Ser537 each carry the phosphoserine modification. The interval 535–559 is disordered; the sequence is HLSLPKPTKNSANLKSLKPDKPDSE.

It belongs to the vinculin/alpha-catenin family. Interacts with ARHGEF1. Interacts with Dtna. The interaction is required for correct localization of both Ctnnal1 and Dtna.

Its subcellular location is the cytoplasm. It localises to the cytoskeleton. The protein localises to the cell membrane. In terms of biological role, may modulate the Rho pathway signaling by providing a scaffold for the Lbc Rho guanine nucleotide exchange factor (ARHGEF1). This chain is Alpha-catulin (Ctnnal1), found in Mus musculus (Mouse).